We begin with the raw amino-acid sequence, 433 residues long: Enolase (433 aa).

Gln167 serves as a coordination point for (2R)-2-phosphoglycerate. The Proton donor role is filled by Glu209. Residues Asp246, Glu287, and Asp314 each contribute to the Mg(2+) site. 4 residues coordinate (2R)-2-phosphoglycerate: Lys339, Arg368, Ser369, and Lys390. The active-site Proton acceptor is Lys339.

This sequence belongs to the enolase family. Mg(2+) is required as a cofactor.

The protein resides in the cytoplasm. The protein localises to the secreted. It is found in the cell surface. It carries out the reaction (2R)-2-phosphoglycerate = phosphoenolpyruvate + H2O. Its pathway is carbohydrate degradation; glycolysis; pyruvate from D-glyceraldehyde 3-phosphate: step 4/5. In terms of biological role, catalyzes the reversible conversion of 2-phosphoglycerate (2-PG) into phosphoenolpyruvate (PEP). It is essential for the degradation of carbohydrates via glycolysis. In Prochlorococcus marinus (strain NATL2A), this protein is Enolase.